A 227-amino-acid chain; its full sequence is Calcium-binding protein 1 (227 aa).

Gly2 carries N-myristoyl glycine lipidation. A lipid anchor (S-palmitoyl cysteine) is attached at Cys4. EF-hand domains are found at residues 82 to 117 (EEIEELREAFREFDKDKDGYINCRDLGNCMRTMGYM), 136 to 153 (GHVDFDDFVELMGPKLLA), 159 to 194 (IGVKELRDAFREFDTNGDGEISTSELREAMRKLLGH), and 196 to 227 (VGHRDIEEIIRDVDLNGDGRVDFEEFVRMMSR). Residues Asp95, Asp97, Asp99, Tyr101, and Asp106 each contribute to the Ca(2+) site. Ca(2+) is bound by residues Asp172, Asn174, Asp176, and Glu178. A Phosphoserine modification is found at Ser180. 6 residues coordinate Ca(2+): Glu183, Asp209, Asn211, Asp213, Arg215, and Glu220.

In terms of assembly, homodimer; when bound to calcium or magnesium. Interacts (via C-terminus) with ITPR1, ITPR2 and ITPR3. This binding is calcium dependent and the interaction correlates with calcium concentration. An additional calcium-independent interaction with the N-terminus of ITPR1 results in a decreased InsP(3) binding to the receptor. Interacts with CACNA1A (via C-terminal CDB motif) in the pre- and postsynaptic membranes. Interacts with CACNA1D and CACNA1C (via C-terminal C and IQ motifs). The binding to the C motif is calcium independent whereas the binding to IQ requires the presence of calcium and is mutually exclusive with calmodulin binding. Interacts with TRPC5 (via C-terminus). Interacts (via EF-hands 1 and 2) at microtubules with MAP1LC3B. Interacts with MYO1C. Interacts (via EF-hands 1 and 2) with NSMF (via the central NLS-containing motif region), the interaction occurs in a calcium dependent manner after synaptic NMDA receptor stimulation and prevents nuclear import of NSMF. Interacts with SPACA9 homolog. In terms of processing, phosphorylated. The phosphorylation regulates the activity. Expressed in the inner retina, specifically in amacrine cells and in cone OFF-bipolar cells (at protein level).

Functionally, modulates calcium-dependent activity of inositol 1,4,5-triphosphate receptors (ITPRs). Inhibits agonist-induced intracellular calcium signaling. Enhances inactivation and does not support calcium-dependent facilitation of voltage-dependent P/Q-type calcium channels. Causes calcium-dependent facilitation and inhibits inactivation of L-type calcium channels by binding to the same sites as calmodulin in the C-terminal domain of CACNA1C, but has an opposite effect on channel function. Suppresses the calcium-dependent inactivation of CACNA1D. Inhibits TRPC5 channels. Prevents NMDA receptor-induced cellular degeneration. Required for the normal transfer of light signals through the retina. This chain is Calcium-binding protein 1 (Cabp1), found in Mus musculus (Mouse).